An 89-amino-acid polypeptide reads, in one-letter code: Cytochrome b (89 aa).

2 helical membrane passes run phenylalanine 38–methionine 58 and tryptophan 82–alanine 89. Histidine 88 is a heme b binding site.

It belongs to the cytochrome b family. The main subunits of complex b-c1 are: cytochrome b, cytochrome c1 and the Rieske protein. Requires heme b as cofactor.

The protein localises to the mitochondrion inner membrane. Component of the ubiquinol-cytochrome c reductase complex (complex III or cytochrome b-c1 complex) that is part of the mitochondrial respiratory chain. The b-c1 complex mediates electron transfer from ubiquinol to cytochrome c. Contributes to the generation of a proton gradient across the mitochondrial membrane that is then used for ATP synthesis. The chain is Cytochrome b (MT-CYB) from Brassica napus (Rape).